Reading from the N-terminus, the 36-residue chain is Glucagon (36 aa).

Belongs to the glucagon family. Produced by the X-cells of the islets of pancreas.

It localises to the secreted. Its function is as follows. Promotes hydrolysis of glycogen and lipids, and raises the blood sugar level. The polypeptide is Glucagon (gcg) (Hydrolagus colliei (Spotted ratfish)).